The following is a 357-amino-acid chain: NADH-quinone oxidoreductase subunit H (357 aa).

8 consecutive transmembrane segments (helical) span residues Val22–Val42, Ile94–Val114, Leu130–Ala150, Ala164–Ile184, Gly199–Ser219, Phe254–Phe274, Ile294–Val314, and Val333–Leu353.

The protein belongs to the complex I subunit 1 family. In terms of assembly, NDH-1 is composed of 14 different subunits. Subunits NuoA, H, J, K, L, M, N constitute the membrane sector of the complex.

It localises to the cell inner membrane. It carries out the reaction a quinone + NADH + 5 H(+)(in) = a quinol + NAD(+) + 4 H(+)(out). Functionally, NDH-1 shuttles electrons from NADH, via FMN and iron-sulfur (Fe-S) centers, to quinones in the respiratory chain. The immediate electron acceptor for the enzyme in this species is believed to be ubiquinone. Couples the redox reaction to proton translocation (for every two electrons transferred, four hydrogen ions are translocated across the cytoplasmic membrane), and thus conserves the redox energy in a proton gradient. This subunit may bind ubiquinone. The sequence is that of NADH-quinone oxidoreductase subunit H from Vesicomyosocius okutanii subsp. Calyptogena okutanii (strain HA).